The sequence spans 251 residues: Elongation factor Ts (251 aa).

The interval 82 to 85 (TDFV) is involved in Mg(2+) ion dislocation from EF-Tu. The disordered stretch occupies residues 215–251 (QMGQKAPEPVAAAPQVEEKAPEPAAKDNPPAKGKKKK). A compositionally biased stretch (low complexity) spans 219-229 (KAPEPVAAAPQ). Over residues 230–239 (VEEKAPEPAA) the composition is skewed to basic and acidic residues.

Belongs to the EF-Ts family.

The protein localises to the cytoplasm. Its function is as follows. Associates with the EF-Tu.GDP complex and induces the exchange of GDP to GTP. It remains bound to the aminoacyl-tRNA.EF-Tu.GTP complex up to the GTP hydrolysis stage on the ribosome. This chain is Elongation factor Ts, found in Microcystis aeruginosa (strain NIES-843 / IAM M-2473).